Here is a 28-residue protein sequence, read N- to C-terminus: U-actitoxin-Ate1 (28 aa).

The first 15 residues, 1 to 15 (MSLILIFFAFTVLKS), serve as a signal peptide directing secretion. The cysteines at positions 20 and 26 are disulfide-linked.

In terms of assembly, monomer in solution. In terms of processing, may be N-glycosylated at Asn-22. Activity with this modification has not be tested. As to expression, highly expressed in the tentacles. Weakly expressed in acrorhagi and mesenteric filaments.

The protein localises to the secreted. It is found in the nematocyst. In terms of biological role, probable toxin expected to be employed in prey capture and/or defense against predators (based on its abundance in tentacles). Has only a weak affinity for lipid membranes. Shows moderate cytotoxic activity against breast cancer cell lines (MCF-7 and MDA-MB-231). The chain is U-actitoxin-Ate1 from Actinia tenebrosa (Australian red waratah sea anemone).